Reading from the N-terminus, the 188-residue chain is Ribosome-recycling factor (188 aa).

Belongs to the RRF family.

It is found in the cytoplasm. In terms of biological role, responsible for the release of ribosomes from messenger RNA at the termination of protein biosynthesis. May increase the efficiency of translation by recycling ribosomes from one round of translation to another. This is Ribosome-recycling factor from Granulibacter bethesdensis (strain ATCC BAA-1260 / CGDNIH1).